Reading from the N-terminus, the 306-residue chain is Esterase tropF (306 aa).

Residues Ser-147, Asp-248, and His-276 each act as charge relay system in the active site.

Belongs to the LovG family.

The protein operates within secondary metabolite biosynthesis. Its function is as follows. Esterase; part of the gene cluster that mediates the biosynthesis of the tropolone class of fungal maleic anhydrides. The pathway begins with the synthesis of 3-methylorcinaldehyde by the non-reducing polyketide synthase (PKS) tropA. 3-methylorcinaldehyde is the substrate for the FAD-dependent monooxygenase tropB to yield a dearomatized hydroxycyclohexadione. The 2-oxoglutarate-dependent dioxygenase tropC then performs the oxidative ring expansion to provide the first tropolone metabolite stipitaldehyde. Trop D converts stipitaldehyde into stipitacetal which is in turn converted to stipitalide by the short-chain dehydrogenase/reductase tropE. The next steps involve tropF, tropG, tropH, tropI and tropJ to form successive tropolone maleic anhydrides including stipitaldehydic, stipitatonic and stipitatic acids. The sequence is that of Esterase tropF from Talaromyces stipitatus (strain ATCC 10500 / CBS 375.48 / QM 6759 / NRRL 1006) (Penicillium stipitatum).